The following is a 912-amino-acid chain: Metabotropic glutamate receptor 4 (912 aa).

Residues 1–32 (MPGKSGLGWWWARLPLCLLLSLYGPWMPSSLG) form the signal peptide. Residues 33-586 (KPKGHPHMNS…PIIKLEWDSP (554 aa)) are Extracellular-facing. Residues C67 and C109 are joined by a disulfide bond. N98 carries N-linked (GlcNAc...) asparagine glycosylation. L-glutamate-binding positions include S159, 180–182 (AST), and Y230. Intrachain disulfides connect C249–C538, C372–C388, C428–C435, C520–C539, C524–C542, C545–C557, and C560–C573. N301 carries an N-linked (GlcNAc...) asparagine glycan. D312 is a binding site for L-glutamate. L-glutamate is bound at residue K405. N-linked (GlcNAc...) asparagine glycans are attached at residues N454 and N484. N569 carries an N-linked (GlcNAc...) asparagine glycan. Residues 587 to 607 (WAVLPLFLAVVGIAATLFVVI) traverse the membrane as a helical segment. Residues 608–624 (TFVRYNDTPIVKASGRE) lie on the Cytoplasmic side of the membrane. The helical transmembrane segment at 625–645 (LSYVLLAGIFLCYATTFLMIA) threads the bilayer. Topologically, residues 646-653 (EPDLGTCS) are extracellular. Residues 654–671 (LRRIFLGLGMSISYAALL) traverse the membrane as a helical segment. Over 672–699 (TKTNRIYRIFEQGKRSVSAPRFISPASQ) the chain is Cytoplasmic. Residues 700–720 (LAITFSLISLQLLGICVWFVV) form a helical membrane-spanning segment. Residues 721–751 (DPSHSVVDFQDQRTLDPRFARGVLKCDISDL) lie on the Extracellular side of the membrane. A helical transmembrane segment spans residues 752 to 772 (SLICLLGYSMLLMVTCTVYAI). Residues 773 to 786 (KTRGVPETFNEAKP) are Cytoplasmic-facing. A helical transmembrane segment spans residues 787–807 (IGFTMYTTCIVWLAFIPIFFG). At 808–826 (TSQSADKLYIQTTTLTVSV) the chain is on the extracellular side. Residues 827 to 847 (SLSASVSLGMLYMPKVYIILF) traverse the membrane as a helical segment. At 848–912 (HPEQNVPKRK…TYVTYTNHAI (65 aa)) the chain is on the cytoplasmic side.

This sequence belongs to the G-protein coupled receptor 3 family. As to quaternary structure, interacts with PICK1.

It localises to the cell membrane. G-protein coupled receptor for glutamate. Ligand binding causes a conformation change that triggers signaling via guanine nucleotide-binding proteins (G proteins) and modulates the activity of down-stream effectors. Signaling inhibits adenylate cyclase activity. The chain is Metabotropic glutamate receptor 4 (GRM4) from Macaca fascicularis (Crab-eating macaque).